The chain runs to 437 residues: La-related protein 7 homolog (437 aa).

The 108-residue stretch at 38 to 145 (SKSPSLTIPK…KRKKKFDNRT (108 aa)) folds into the HTH La-type RNA-binding domain. A xRRM domain is found at 279 to 397 (ELSQSCFLKI…QRSSIDEIKA (119 aa)). Positions 417–427 (RRPVSKRKNKA) are enriched in basic residues. Residues 417 to 437 (RRPVSKRKNKAINKMSTEVKK) form a disordered region.

The protein belongs to the LARP7 family. As to quaternary structure, component of the telomerase holoenzyme complex composed minimally of the catalytic subunit p123 and the telomerase RNA template component. In terms of processing, the mature form of the protein is a protein of 43 kDa, which is derived from a 51 kDa precursor by proteolytic cleavage.

It is found in the nucleus. The protein localises to the chromosome. Its subcellular location is the telomere. Functionally, RNA-binding protein required for assembly of the holoenzyme telomerase ribonucleoprotein (RNP) complex. Specifically binds telomerase RNA and promotes its assembly with catalytic subunit p123, thereby stimulating enzymatic activity and processivity of p123. Telomerase is a ribonucleoprotein enzyme essential that copies new telomeric repeats onto chromosome ends and functions to maintain cell division. The protein is La-related protein 7 homolog of Euplotes aediculatus (Ciliate).